Reading from the N-terminus, the 264-residue chain is Thymidylate synthase (264 aa).

Residue arginine 21 coordinates dUMP. Position 51 (histidine 51) interacts with (6R)-5,10-methylene-5,6,7,8-tetrahydrofolate. 126–127 (RR) lines the dUMP pocket. Residue cysteine 146 is the Nucleophile of the active site. DUMP-binding positions include 166-169 (RSAD), asparagine 177, and 207-209 (HLY). Aspartate 169 is a (6R)-5,10-methylene-5,6,7,8-tetrahydrofolate binding site. Alanine 263 is a (6R)-5,10-methylene-5,6,7,8-tetrahydrofolate binding site.

It belongs to the thymidylate synthase family. Bacterial-type ThyA subfamily. As to quaternary structure, homodimer.

The protein resides in the cytoplasm. The catalysed reaction is dUMP + (6R)-5,10-methylene-5,6,7,8-tetrahydrofolate = 7,8-dihydrofolate + dTMP. The protein operates within pyrimidine metabolism; dTTP biosynthesis. In terms of biological role, catalyzes the reductive methylation of 2'-deoxyuridine-5'-monophosphate (dUMP) to 2'-deoxythymidine-5'-monophosphate (dTMP) while utilizing 5,10-methylenetetrahydrofolate (mTHF) as the methyl donor and reductant in the reaction, yielding dihydrofolate (DHF) as a by-product. This enzymatic reaction provides an intracellular de novo source of dTMP, an essential precursor for DNA biosynthesis. The chain is Thymidylate synthase from Hyphomonas neptunium (strain ATCC 15444).